The primary structure comprises 876 residues: Alanine--tRNA ligase (876 aa).

N6-acetyllysine is present on Lys-74. Zn(2+)-binding residues include His-564, His-568, Cys-666, and His-670.

The protein belongs to the class-II aminoacyl-tRNA synthetase family. In terms of assembly, homotetramer. Requires Zn(2+) as cofactor.

Its subcellular location is the cytoplasm. It carries out the reaction tRNA(Ala) + L-alanine + ATP = L-alanyl-tRNA(Ala) + AMP + diphosphate. Functionally, catalyzes the attachment of alanine to tRNA(Ala) in a two-step reaction: alanine is first activated by ATP to form Ala-AMP and then transferred to the acceptor end of tRNA(Ala). Also edits incorrectly charged Ser-tRNA(Ala) and Gly-tRNA(Ala) via its editing domain. The chain is Alanine--tRNA ligase from Escherichia coli O1:K1 / APEC.